Reading from the N-terminus, the 173-residue chain is Myeloid-derived growth factor (173 aa).

Positions 1 to 31 (MAAPSGGWNGVGASLWAALLLGAVALRPAEA) are cleaved as a signal peptide.

It belongs to the MYDGF family. In terms of tissue distribution, expressed in eosinophils (at protein level). Expressed in bone marrow cells. Expressed in synovial tissue. Found in synovial fluid of patients with arthropaties.

It is found in the secreted. The protein resides in the endoplasmic reticulum-Golgi intermediate compartment. Its subcellular location is the endoplasmic reticulum. It localises to the golgi apparatus. Functionally, bone marrow-derived monocyte and paracrine-acting protein that promotes cardiac myocyte survival and adaptive angiogenesis for cardiac protection and/or repair after myocardial infarction (MI). Stimulates endothelial cell proliferation through a MAPK1/3-, STAT3- and CCND1-mediated signaling pathway. Inhibits cardiac myocyte apoptosis in a PI3K/AKT-dependent signaling pathway. Involved in endothelial cell proliferation and angiogenesis. This chain is Myeloid-derived growth factor, found in Homo sapiens (Human).